A 377-amino-acid chain; its full sequence is Glutamate 5-kinase (377 aa).

Residue Lys-22 coordinates ATP. Substrate is bound by residues Ser-62, Asp-149, and Asn-161. ATP contacts are provided by residues 181–182 (TD) and 223–229 (TGGMVTK). The 79-residue stretch at 285-363 (RGVLVADSGA…AQLRRLLGEE (79 aa)) folds into the PUA domain.

The protein belongs to the glutamate 5-kinase family.

The protein resides in the cytoplasm. The catalysed reaction is L-glutamate + ATP = L-glutamyl 5-phosphate + ADP. Its pathway is amino-acid biosynthesis; L-proline biosynthesis; L-glutamate 5-semialdehyde from L-glutamate: step 1/2. Catalyzes the transfer of a phosphate group to glutamate to form L-glutamate 5-phosphate. The sequence is that of Glutamate 5-kinase from Bifidobacterium animalis subsp. lactis (strain AD011).